The sequence spans 242 residues: Beta-glucanase (242 aa).

A signal peptide spans 1-28 (MPYLKRVLLLLVTGLFMSLFAVTATASA). Gln29 bears the Pyrrolidone carboxylic acid mark. In terms of domain architecture, GH16 spans 29-242 (QTGGSFFDPF…HYDWVRYTKK (214 aa)). Cys60 and Cys89 form a disulfide bridge. The active-site Nucleophile is the Glu133. The Proton donor role is filled by Glu137.

Belongs to the glycosyl hydrolase 16 family.

The protein resides in the secreted. It carries out the reaction Hydrolysis of (1-&gt;4)-beta-D-glucosidic linkages in beta-D-glucans containing (1-&gt;3)- and (1-&gt;4)-bonds.. This is Beta-glucanase (bglS) from Bacillus subtilis (strain 168).